The sequence spans 206 residues: 3-isopropylmalate dehydratase small subunit (206 aa).

Belongs to the LeuD family. LeuD type 1 subfamily. In terms of assembly, heterodimer of LeuC and LeuD.

The enzyme catalyses (2R,3S)-3-isopropylmalate = (2S)-2-isopropylmalate. Its pathway is amino-acid biosynthesis; L-leucine biosynthesis; L-leucine from 3-methyl-2-oxobutanoate: step 2/4. Functionally, catalyzes the isomerization between 2-isopropylmalate and 3-isopropylmalate, via the formation of 2-isopropylmaleate. This chain is 3-isopropylmalate dehydratase small subunit, found in Leptospira borgpetersenii serovar Hardjo-bovis (strain JB197).